Reading from the N-terminus, the 378-residue chain is Merozoite surface protein P41 (378 aa).

The N-terminal stretch at 1-20 is a signal peptide; sequence MKGVIFCLVVLLWRQAWVSS. Positions 21 to 133 constitute a 6-Cys 1 domain; that stretch reads KSHKCDFTKE…LKINRFLKDD (113 aa). 3 cysteine pairs are disulfide-bonded: cysteine 25–cysteine 42, cysteine 56–cysteine 113, and cysteine 64–cysteine 111. 4 N-linked (GlcNAc...) asparagine glycosylation sites follow: asparagine 77, asparagine 149, asparagine 182, and asparagine 205. The 6-Cys 2 domain maps to 241 to 375; it reads VIKGCDFGNN…GESEVVLNSF (135 aa). Intrachain disulfides connect cysteine 245-cysteine 270, cysteine 284-cysteine 348, and cysteine 297-cysteine 346. An N-linked (GlcNAc...) asparagine glycan is attached at asparagine 351.

As to quaternary structure, heterodimer; heterodimerizes with PF12. May form an antiparallel heterodimer with PF12. In terms of processing, processed into a soluble form.

It localises to the cell surface. Its subcellular location is the cell membrane. This Plasmodium falciparum (isolate 3D7) protein is Merozoite surface protein P41 (PF41).